A 480-amino-acid polypeptide reads, in one-letter code: Cysteine--tRNA ligase (480 aa).

Position 29 (cysteine 29) interacts with Zn(2+). A 'HIGH' region motif is present at residues 31–41; the sequence is ITVYDYCHLGH. Positions 215, 240, and 244 each coordinate Zn(2+). Positions 272–276 match the 'KMSKS' region motif; the sequence is KMSKS. Residue lysine 275 coordinates ATP.

Belongs to the class-I aminoacyl-tRNA synthetase family. In terms of assembly, monomer. Zn(2+) serves as cofactor.

Its subcellular location is the cytoplasm. The enzyme catalyses tRNA(Cys) + L-cysteine + ATP = L-cysteinyl-tRNA(Cys) + AMP + diphosphate. This is Cysteine--tRNA ligase from Microcystis aeruginosa (strain NIES-843 / IAM M-2473).